We begin with the raw amino-acid sequence, 508 residues long: H/ACA ribonucleoprotein complex subunit 4 (508 aa).

Positions 1–29 (MADVEVRKEKKKKKIKEEPLDGDDIGTLQ) are disordered. The Nucleophile role is filled by Asp-123. The region spanning 294–369 (HKRIIMKDSS…VVAKIKRVIM (76 aa)) is the PUA domain. The segment at 423-508 (AAQEVSPTNG…KDRDRDEAQE (86 aa)) is disordered. Phosphoserine is present on Ser-442. The segment covering 442 to 457 (STSSVEETAAAAVSEE) has biased composition (low complexity). The residue at position 443 (Thr-443) is a Phosphothreonine. Phosphoserine is present on residues Ser-444 and Ser-445. Thr-449 is modified (phosphothreonine). Ser-455 carries the post-translational modification Phosphoserine. At Thr-458 the chain carries Phosphothreonine. Residues 475 to 485 (EAPEAAEEEAE) are compositionally biased toward acidic residues. Residues 499–508 (KDRDRDEAQE) are compositionally biased toward basic and acidic residues.

This sequence belongs to the pseudouridine synthase TruB family. In terms of assembly, component of the box H/ACA small nucleolar ribonucleoprotein (H/ACA snoRNP) complex consisting of Nop60B, Gar1, NPH2 and Nop10, and associated with H/ACA-type snoRNAs. In terms of tissue distribution, expressed at higher levels in females than in males. Expressed almost exclusively in females with high levels of expression in the ovary.

Its subcellular location is the nucleus. The protein resides in the nucleolus. The catalysed reaction is a uridine in RNA = a pseudouridine in RNA. Functionally, catalytic subunit of the box H/ACA small nucleolar ribonucleoprotein (H/ACA snoRNP) complex, which catalyzes pseudouridylation of rRNA. This involves the isomerization of uridine such that the ribose is subsequently attached to C5, instead of the normal N1. Pseudouridine ('psi') residues may serve to stabilize the conformation of rRNAs. Required for ribosome biogenesis; plays a central role in ribosomal RNA processing. H/ACA snoRNP complex-dependent ribosome biogenesis is important in female germline cell differentiation during oogenesis. Essential for viability and female fertility. Required for maintenance of the germline stem cell lineage during spermatogenesis. The chain is H/ACA ribonucleoprotein complex subunit 4 from Drosophila melanogaster (Fruit fly).